The following is a 377-amino-acid chain: Succinyl-diaminopimelate desuccinylase (377 aa).

His66 is a Zn(2+) binding site. The active site involves Asp68. Asp99 lines the Zn(2+) pocket. Glu133 (proton acceptor) is an active-site residue. The Zn(2+) site is built by Glu134, Glu162, and His348.

It belongs to the peptidase M20A family. DapE subfamily. In terms of assembly, homodimer. Zn(2+) is required as a cofactor. It depends on Co(2+) as a cofactor.

It carries out the reaction N-succinyl-(2S,6S)-2,6-diaminopimelate + H2O = (2S,6S)-2,6-diaminopimelate + succinate. The protein operates within amino-acid biosynthesis; L-lysine biosynthesis via DAP pathway; LL-2,6-diaminopimelate from (S)-tetrahydrodipicolinate (succinylase route): step 3/3. Catalyzes the hydrolysis of N-succinyl-L,L-diaminopimelic acid (SDAP), forming succinate and LL-2,6-diaminopimelate (DAP), an intermediate involved in the bacterial biosynthesis of lysine and meso-diaminopimelic acid, an essential component of bacterial cell walls. The protein is Succinyl-diaminopimelate desuccinylase of Bordetella avium (strain 197N).